We begin with the raw amino-acid sequence, 255 residues long: Fe(3+) dicitrate transport ATP-binding protein FecE (255 aa).

The ABC transporter domain occupies 3–238 (LRTENLTVSY…GLLRTVFSVE (236 aa)). 35–42 (GPNGCGKS) serves as a coordination point for ATP.

It belongs to the ABC transporter superfamily. The complex is composed of two ATP-binding proteins (FecE), two transmembrane proteins (FecC and FecD) and a solute-binding protein (FecB).

The protein localises to the cell inner membrane. The catalysed reaction is iron(III) dicitrate(out) + ATP + H2O = iron(III) dicitrate(in) + ADP + phosphate + H(+). Functionally, part of the ABC transporter complex FecBCDE involved in citrate-dependent Fe(3+) uptake. Binds ATP. Probably responsible for energy coupling to the transport system. The protein is Fe(3+) dicitrate transport ATP-binding protein FecE of Escherichia coli (strain K12).